We begin with the raw amino-acid sequence, 960 residues long: Endosome/lysosome-associated apoptosis and autophagy regulator family member 2 (960 aa).

Residues 1-26 (MLFLRPGPARGRGRGRPARAPHSGLS) are disordered. The N-terminal stretch at 1–44 (MLFLRPGPARGRGRGRPARAPHSGLSPPWSPAWICCWALAGCQA) is a signal peptide. Residues 45–860 (AWAGAGDLPS…TCETVDFWLK (816 aa)) are Extracellular-facing. N171 is a glycosylation site (N-linked (GlcNAc...) asparagine). 3 cysteine pairs are disulfide-bonded: C295/C312, C325/C348, and C328/C360. N-linked (GlcNAc...) asparagine glycans are attached at residues N407 and N622. The region spanning 597–808 (PTCPYIRSMA…LWESVEACPL (212 aa)) is the MRH domain. Disulfide bonds link C599/C651, C661/C689, C758/C794, and C770/C806. The helical transmembrane segment at 861 to 881 (VGAGVGAFTAVLLVALTCYFW) threads the bilayer. Residues 882–960 (KKNQKLEYKY…QLKSSRSPNI (79 aa)) are Cytoplasmic-facing. The residue at position 949 (S949) is a Phosphoserine.

Belongs to the ELAPOR family.

The protein resides in the cell membrane. In terms of biological role, functions as a regulator of the BMP signaling pathway and may be involved in epidermal differentiation. This is Endosome/lysosome-associated apoptosis and autophagy regulator family member 2 from Bos taurus (Bovine).